The following is a 148-amino-acid chain: uncharacterized protein (148 aa).

Low complexity predominate over residues 1-17; that stretch reads MCPPVRQRPAQAPPAKR. 2 disordered regions span residues 1–86 and 122–148; these read MCPP…VQSP and RAHRLPQPKPPCQSRQRPSPDSQTSPC. The span at 38–57 shows a compositional bias: basic residues; the sequence is RPPKMQRRPRPPVAKRRRFP. Residues 134 to 148 show a composition bias toward polar residues; that stretch reads QSRQRPSPDSQTSPC.

The protein belongs to the Epstein-Barr virus BLLF2 family.

This is an uncharacterized protein from Homo sapiens (Human).